A 152-amino-acid chain; its full sequence is Snaclec coagulation factor IX/factor X-binding protein subunit A (152 aa).

Positions 1–23 are cleaved as a signal peptide; the sequence is MGRFIFLSFGLLVVFLSLSGTGA. Disulfide bonds link cysteine 25–cysteine 36, cysteine 53–cysteine 150, and cysteine 125–cysteine 142. Positions 32-151 constitute a C-type lectin domain; the sequence is YEGHCYNIFH…CGERNPFVCE (120 aa). Ca(2+) contacts are provided by serine 64, glutamate 66, and glutamate 70. Glutamate 151 serves as a coordination point for Ca(2+).

This sequence belongs to the snaclec family. In terms of assembly, heterodimer of subunits A and B; disulfide-linked. In terms of tissue distribution, expressed by the venom gland.

The protein resides in the secreted. Its function is as follows. Anticoagulant protein which binds to the gamma-carboxyglutamic acid-domain regions of factors IX (F9) and factor X (F10) in the presence of calcium with a 1 to 1 stoichiometry. The protein is Snaclec coagulation factor IX/factor X-binding protein subunit A of Gloydius halys (Chinese water mocassin).